A 300-amino-acid chain; its full sequence is Inositol polyphosphate multikinase beta (300 aa).

A Phosphoserine modification is found at S78.

The protein belongs to the inositol phosphokinase (IPK) family. Interacts with KIN10 and KIN11. Post-translationally, phosphorylated by KIN10. Expressed in leaves, stems, roots, siliques and flowers. Detected in vascular strands, stigma cells, the abscission zones of fully elongated siliques, the root central cylinder and the root tip.

The protein localises to the nucleus. It carries out the reaction 1D-myo-inositol 1,4,5-trisphosphate + 2 ATP = 1D-myo-inositol 1,3,4,5,6-pentakisphosphate + 2 ADP + 2 H(+). It catalyses the reaction 1D-myo-inositol 1,3,4,6-tetrakisphosphate + ATP = 1D-myo-inositol 1,3,4,5,6-pentakisphosphate + ADP + H(+). Down-regulated by KIN10 through its protein phosphorylation. Its function is as follows. Inositol phosphate kinase with a broad substrate specificity. Phosphorylates inositol 1,4,5-trisphosphate (Ins(1,4,5)P3), inositol 1,4,5,6-tetrakisphosphate (Ins(1,4,5,6)P4), inositol 1,3,4,5-tetrakisphosphate (Ins(1,3,4,5)P4), inositol 1,3,4,6-tetrakisphosphate (Ins(1,3,4,6)P4) and inositol 1,2,3,4,6-pentakisphosphate (Ins(1,2,3,4,6)P5) but not inositol 1,4-bisphosphate (Ins(1,4)P2), inositol 1,3,4-trisphosphate (Ins(1,3,4)P3), inositol 1,2,6-trisphosphate (Ins(1,2,6)P3), inositol 3,4,5,6-tetrakisphosphate (Ins(3,4,5,6)P4), inositol 1,3,4,5,6-pentakisphosphate (Ins(1,3,4,5,6)P5), inositol 1,2,4,5,6-pentakisphosphate (Ins(1,2,4,5,6)P5) or inositol hexakisphosphate (InsP6). Involved in the auxin signaling pathway. Regulates axillary shoot branching and is required for phytate synthesis in seeds. The chain is Inositol polyphosphate multikinase beta (IPK2b) from Arabidopsis thaliana (Mouse-ear cress).